The following is a 1983-amino-acid chain: MTLPTSLCDLFAQAASRCPDNLAVDHTEGSLTYRQLDDVSNSLANMLMGLGVNQLSPVILLTSHGTFNIIATLAILKVGSCCVPIDRATWPQERINYVCQTVANSVILNTTSEPFMPSEGAGDVLNYTSMQSGPSFRPNPVFQAHKVAADDTAYIIFTSGSTGKPKGVLISHKSLCLYSTTSPINLDIGPGDRLLHILSVAFDACACMLFSALGNCGTIVPAQAEDVLLQAPSCTVLAATPAMLKNLPSPTTENSIFSNLSRVILGGETASPDLLGLWIDAGVQVLIAYGVTETTSMGSIYRVERDPRTDAINPYIIGGVLEQSPIWIVDSELRIIKNENSEGEIIVGGDGVAQGYYNDEQKTRSNFIHWNGSRIYRTGDFGCWVLDANGRRVIEFRGRKDRTVKNQGYLVNLDRDVEAALYRVGESFGLTSVRAVATGNGIVAVVTPSNVNTSALIEKAKDIMCSYCIPYRIGAVDDLPLSPNGKVQHNELAELIKIIDEGQHNQENKADSQLSEKIERGKFGDDRHLDTLLTVARDVLSLPGQSFRILQPHDSFFAVGGSSLLAFKLVSVLGQHGLNIPARELFKNQPFSDVAPLITSRAHSSTWRLTEHDDKTQQTLAELQNQACQMLGLVQNSFEIGPLTSLQLDLALPTLGDESRNINQVKIAYNAPHSGIMRRAWQGLWQSEPVFRTEVSLAVGCGALIVHNKPFRKYRVVSHSCRDKYEEAVKGINMGVGLGCTLDVLTYHKTSDGLPYLPVSSNHNSSSSETDELTVVLTIHHSLMDGESLKLLLDKVDRIALGFSQPLSGSSINANLALIKTQNSRDSEVRSFFSDYLRHLSPENIAPGQVSATENLEGSSSRETAFFETSVSSVEVSDFAKLNCSSAACIYYIAWAMAVAAFDNSPDVLIGAVVSNRPALQHHEHAIGAYMSTLPLVFNFRDDEETVVDRIQKTMEDLATVGEYAWARSDQCGIGRRMRTLLSMQFPLPNESSKPPALWTESAENSDFPLCLLVESSGDFRMLYDATQFNWEAAQRLGQHFKHALYSLHHETRVTDCMTVNRLQENLAKQSEIFRLKPSERIVKQVLEQVMGQFPSLIAVEDCLGGKLTYSELDKLTNVIAHHINSTVPNAEVIALYSDGTIQWILGLLGTVKAGCTYVNLDPRSSVSRRETICKQCGAEALLLPNASQASEAPLMDNLKVLAVDEMLSGNSKKHNGKQPDRASLDSSLVIVFTSGTTGNPKGILISNRSFLSMETSYGTTMFAAPGRRIAQFMSPVFDVCNMEIFSALLHGATLVLRDPSDPYANLHRVNTAAVTPSAMAVIDLDDFPNLQLIYACGEPVTKSLVKRYTKRALLYNAYGPAECSILTSIERLIPGDQVTVGRPLSTVRVYILDEDQHPMAPGDRGEVCVAGVQVLRDYINAPEQAARNILTDPWYPGERMYRSGDSGSIGRDGRLSLHGRIDRLVKLRGFRVELAGVEHAVVSGPTEEGVSQCAAIAVNGLLIVYVSFERSQQHDSLSNKERIAQLLSRLREQLLPSSVPQEIVHIDNFPRTINGKIDTRALETQYSSYKNTSIEKAVGDCPITRPKIEDKLAHEWRQVLQLIPETQLQESDDFFKLGGHSVSIMLLATRLTAAFGKKITVRELLPSPTFKDQINMVRALLEIETFHKEEPQMLPPLLTEELTSIEKQVWFQHQVATTVTAFNIIRVIQIEGAVEIDKLCQSLNNILSIDPIFRSNIVEGPKGPARILRNSAPTVQEVDEFDIERALHHRFNLAHDYLIQVYLARHGCKGDNNDHATLVILTSHVIADLGTLQNFLQLTSTAYSGSTLVPLDRPKHLDSKSWTRIPTFSERKFWSEYLKGLIRRLGLTHHQLALAVGALFLQWFSAEDDLVLGAPNSGRPTSQEQESLGQFLDRLPIRITPNDLGNDDTMTKLTEILNRVRHSSLKALSNAISFSNIIQDLGYPSGGLEHPLFECDCFYTVS.

The adenylation 1 stretch occupies residues 11-405; that stretch reads FAQAASRCPD…FRGRKDRTVK (395 aa). Positions 526–602 constitute a Carrier 1 domain; sequence DRHLDTLLTV…DVAPLITSRA (77 aa). Ser-563 carries the O-(pantetheine 4'-phosphoryl)serine modification. Positions 769–1047 are condensation 1; sequence ETDELTVVLT…GQHFKHALYS (279 aa). The segment at 1089 to 1469 is adenylation 2; sequence QVMGQFPSLI…GRIDRLVKLR (381 aa). The Carrier 2 domain maps to 1584–1662; it reads ITRPKIEDKL…DQINMVRALL (79 aa). The residue at position 1622 (Ser-1622) is an O-(pantetheine 4'-phosphoryl)serine. Positions 1652–1976 are condensation 2; sequence KDQINMVRAL…GGLEHPLFEC (325 aa).

Belongs to the NRP synthetase family.

It functions in the pathway mycotoxin biosynthesis. Nonribosomal peptide synthetase; part of the gene cluster that mediates the biosynthesis of 11'-deoxyverticillin A, one of the dimeric epipolythiodioxopiperazines (ETPs) from the verticillin family that act as mycotoxins. 11'-deoxyverticillin A is required for normal conidiation. The nonribosomal peptide synthetase verP is speculated to be responsible for condensation of amino acids to form the carbon skeleton of verticillin, whereas the cluster-specific tailoring enzymes are involved in further modifications leading to the production of 11'-deoxyverticillin A. The chain is Nonribosomal peptide synthetase verP from Clonostachys rogersoniana.